A 377-amino-acid polypeptide reads, in one-letter code: Pseudouridylate synthase RPUSD4, mitochondrial (377 aa).

Positions 51–70 (LRAQKQQQKTKEPAPTNPVQ) are disordered. Asp153 is an active-site residue.

This sequence belongs to the pseudouridine synthase RluA family. In terms of assembly, interacts with 16S mt-rRNA, mt-tRNA(Phe) and mt-tRNA(Met). Forms a regulatory protein-RNA complex, consisting of RCC1L, NGRN, RPUSD3, RPUSD4, TRUB2, FASTKD2 and 16S mt-rRNA.

It localises to the mitochondrion matrix. The protein resides in the nucleus. The protein localises to the cytoplasm. It carries out the reaction uridine in 5S rRNA = pseudouridine in 5S rRNA. It catalyses the reaction a uridine in tRNA = a pseudouridine in tRNA. The enzyme catalyses a uridine in mRNA = a pseudouridine in mRNA. Catalyzes uridine to pseudouridine isomerization (pseudouridylation) of different mitochondrial RNA substrates. Acts on position 1397 in 16S mitochondrial ribosomal RNA (16S mt-rRNA). This modification is required for the assembly of 16S mt-rRNA into a functional mitochondrial ribosome. As a component of a functional protein-RNA module, consisting of RCC1L, NGRN, RPUSD3, RPUSD4, TRUB2, FASTKD2 and 16S mt-rRNA, controls 16S mt-rRNA abundance and is required for intra-mitochondrial translation. Acts on position 39 in mitochondrial tRNA(Phe). Also catalyzes pseudouridylation of mRNAs in nucleus: acts as a regulator of pre-mRNA splicing by mediating pseudouridylation of pre-mRNAs at locations associated with alternatively spliced regions. Pseudouridylation of pre-mRNAs near splice sites directly regulates mRNA splicing and mRNA 3'-end processing. The chain is Pseudouridylate synthase RPUSD4, mitochondrial from Bos taurus (Bovine).